Consider the following 184-residue polypeptide: Cytosolic Prostaglandin E synthase (184 aa).

Residues 7–96 (LIPPPVSWAQ…AAGPYWSSLT (90 aa)) form the CS domain. Residues 115–184 (ESDDEEGDQK…EGDKEKKPAA (70 aa)) form a disordered region. Residues Ser-116, Ser-127, Ser-135, Ser-156, and Ser-162 each carry the phosphoserine modification. Residues 147-158 (FNVDDEEEDSDD) are compositionally biased toward acidic residues. Residues 175–184 (EGDKEKKPAA) show a composition bias toward basic and acidic residues.

It belongs to the p23/wos2 family.

The protein resides in the cytoplasm. The enzyme catalyses prostaglandin H2 = prostaglandin E2. In terms of biological role, cytosolic prostaglandin synthase that catalyzes the oxidoreduction of prostaglandin endoperoxide H2 (PGH2) to prostaglandin E2 (PGE2). Through production of PGE2 may regulate the activity of non-muscle myosin II in an autocrine or paracrine fashion; this may influence border cell and nurse cell stiffness to facilitate border cell migration during oogenesis. This Drosophila melanogaster (Fruit fly) protein is Cytosolic Prostaglandin E synthase.